The following is a 196-amino-acid chain: HTH-type transcriptional regulator BetI (196 aa).

The 61-residue stretch at 8–68 (EVRRAQLIDA…ATMRHILRDL (61 aa)) folds into the HTH tetR-type domain. The H-T-H motif DNA-binding region spans 31–50 (TLASVAQRANISTGIVSHYF).

It participates in amine and polyamine biosynthesis; betaine biosynthesis via choline pathway [regulation]. Repressor involved in the biosynthesis of the osmoprotectant glycine betaine. It represses transcription of the choline transporter BetT and the genes of BetAB involved in the synthesis of glycine betaine. In Paraburkholderia phymatum (strain DSM 17167 / CIP 108236 / LMG 21445 / STM815) (Burkholderia phymatum), this protein is HTH-type transcriptional regulator BetI.